The following is a 181-amino-acid chain: uncharacterized protein (181 aa).

Transmembrane regions (helical) follow at residues 3–23 (LSQT…VLIL), 67–87 (ALLL…GLSV), 92–112 (VLGV…VLFI), and 159–179 (MFIL…LWII).

This sequence belongs to the YggT family.

The protein localises to the cell membrane. This is an uncharacterized protein from Haemophilus influenzae (strain ATCC 51907 / DSM 11121 / KW20 / Rd).